Consider the following 753-residue polypeptide: MTILNHTLGFPRVGLRRELKKAQESYWAGNSTREELLAVGRELRARHWDQQKQAGIDLLPVGDFAWYDHVLTTSLLLGNVPARHQNKDGSVDIDTLFRIGRGRAPTGEPAAAAEMTKWFNTNYHYMVPEFVKGQQFKLTWTQLLEEVDEALALGHNVKPVLLGPVTWLWLGKVKGEQFDRLSLLNDILPVYQQVLAELEKRGIEWVQIDEPALVLELPQAWLDAYKPAYDALQGQVKLLLTTYFEGVTPNLDTITALPVQGLHVDLVHGKDGVAELHKRLPSDWLLSAGLINGRNVWRADLTEKYAQIKDIVGKRDLWVASSCSLLHSPIDLSVETRLDAEVKSWFAFALQKCHELALLRDALKSGDTAALAEWSAPIQARRHSTRVHNPAVEKRLAAITAQDSQRANVYEVRAEAQRARFKLPAWPTTTIGSFPQTTEIRTLRLDFKKGNLDANNYRTGIAEHIKQAIVEQERLGLDVLVHGEAERNDMVEYFGEHLDGFVFTQNGWVQSYGSRCVKPPIVIGDVSRPAPITVEWAKYAQSLTDKPVKGMLTGPVTILCWSFPREDVSRETIAKQIALALRDEVADLEAAGIGIIQIDEPALREGLPLRRSDWDAYLQWGVEAFRINAAVAKDDTQIHTHMCYCEFNDIMDSIAALDADVITIETSRSDMELLESFEEFDYPNEIGPGVYDIHSPNVPSVEWIEALLKKAAKRIPAERLWVNPDCGLKTRGWPETRAALANMVQAAQNLRRG.

Residues 17–20 (RELK) and Lys117 contribute to the 5-methyltetrahydropteroyltri-L-glutamate site. Residues 431–433 (IGS) and Glu484 contribute to the L-homocysteine site. Residues 431–433 (IGS) and Glu484 each bind L-methionine. 5-methyltetrahydropteroyltri-L-glutamate is bound by residues 515–516 (RC) and Trp561. Asp599 serves as a coordination point for L-homocysteine. Asp599 contacts L-methionine. Residue Glu605 coordinates 5-methyltetrahydropteroyltri-L-glutamate. 3 residues coordinate Zn(2+): His641, Cys643, and Glu665. His694 serves as the catalytic Proton donor. Cys726 is a binding site for Zn(2+).

It belongs to the vitamin-B12 independent methionine synthase family. Zn(2+) serves as cofactor.

It carries out the reaction 5-methyltetrahydropteroyltri-L-glutamate + L-homocysteine = tetrahydropteroyltri-L-glutamate + L-methionine. The protein operates within amino-acid biosynthesis; L-methionine biosynthesis via de novo pathway; L-methionine from L-homocysteine (MetE route): step 1/1. Catalyzes the transfer of a methyl group from 5-methyltetrahydrofolate to homocysteine resulting in methionine formation. The polypeptide is 5-methyltetrahydropteroyltriglutamate--homocysteine methyltransferase (Shigella boydii serotype 18 (strain CDC 3083-94 / BS512)).